The sequence spans 86 residues: Small ribosomal subunit protein bS20 (86 aa).

The segment at 1–26 (MANIKSAKKRAITSEKRRQHNASRRS) is disordered.

Belongs to the bacterial ribosomal protein bS20 family.

In terms of biological role, binds directly to 16S ribosomal RNA. This Photobacterium profundum (strain SS9) protein is Small ribosomal subunit protein bS20.